The primary structure comprises 412 residues: Small ribosomal subunit protein mL103 (rPPR7) (412 aa).

Residues Met-1–Phe-14 constitute a mitochondrion transit peptide. Over residues Gly-21–Lys-37 the composition is skewed to polar residues. The disordered stretch occupies residues Gly-21 to Glu-43. 8 PPR repeats span residues Glu-101–Arg-135, Ser-136–Arg-166, Asp-173–Val-207, Thr-208–Leu-242, Asp-243–Pro-276, Asp-277–Pro-311, Asn-312–Pro-346, and Asp-347–Lys-377.

Belongs to the PPR family. P subfamily. Component of the mitochondrial ribosome small subunit.

The protein localises to the mitochondrion. This chain is Small ribosomal subunit protein mL103 (rPPR7), found in Arabidopsis thaliana (Mouse-ear cress).